Here is an 837-residue protein sequence, read N- to C-terminus: ABC transporter A family member 8 (837 aa).

The next 7 helical transmembrane spans lie at 29–49 (YFST…FYII), 244–264 (VVSL…FIFL), 303–323 (LIIC…FFLG), 326–346 (FLVL…MAFF), 356–376 (VAIG…LTFN), 393–413 (GAAF…SKVL), and 455–475 (LAYM…IEYA). The ABC transporter domain maps to 516–750 (IRGLSKTFNK…YGEGYSVQVI (235 aa)). 553–560 (GSNGAGKS) provides a ligand contact to ATP.

It belongs to the ABC transporter superfamily. ABCA family.

The protein localises to the membrane. The sequence is that of ABC transporter A family member 8 (abcA8) from Dictyostelium discoideum (Social amoeba).